The following is a 391-amino-acid chain: MKLTLISSCVALAFMALATEAAPSGKKLSIPLTKNTNYKPSAKNAIQKALAKYHRFRTTSSSNSTSTEGTGSVPVTDYYNDIEYYGKVTVGTPGVTLKLDFDTGSSDLWFASTLCTNCGSSQTKYNPNQSSTYAKDGRTWSISYGDGSSASGILGTDTVTLGGLKITKQTIELAKREATSFQSGPSYGLLGLGFDTITTVRGVKTPVDNLISQGLISKPIFGVYLGKESNGGGGEYIFGGYDSSKYSGSLTTIPVDNSNGWYGITIKGTTIGSSKVSSSFSAILDTGTTLLILPNNVASAVARSYGASDNGDGTYTIDCDTSSFKPLVFSIGSSTFEVPADSLVFEQDGSTCYAGFGYGDYDFAIFGDVFLKNNYVVFNQEVPEVQIAPIA.

A signal peptide spans 1-21; sequence MKLTLISSCVALAFMALATEA. Residues 22-68 constitute a propeptide, activation peptide; that stretch reads APSGKKLSIPLTKNTNYKPSAKNAIQKALAKYHRFRTTSSSNSTSTE. Residues 84 to 388 enclose the Peptidase A1 domain; the sequence is YYGKVTVGTP…NQEVPEVQIA (305 aa). Asp102 is an active-site residue. A disulfide bond links Cys115 and Cys118. Asp285 is a catalytic residue. The cysteines at positions 319 and 352 are disulfide-linked.

Belongs to the peptidase A1 family.

It catalyses the reaction Hydrolysis of proteins with broad specificity similar to that of pepsin A, preferring hydrophobic residues at P1 and P1'. Clots milk and activates trypsinogen. Does not cleave 4-Gln-|-His-5, but does cleave 10-His-|-Leu-11 and 12-Val-|-Glu-13 in B chain of insulin.. This is Rhizopuspepsin-2 from Rhizopus niveus.